Reading from the N-terminus, the 159-residue chain is Glutamate-rich protein GrpA (159 aa).

The polypeptide is Glutamate-rich protein GrpA (grpA) (Alkalihalophilus pseudofirmus (strain ATCC BAA-2126 / JCM 17055 / OF4) (Bacillus pseudofirmus)).